A 201-amino-acid chain; its full sequence is Recombination protein RecR (201 aa).

The C4-type zinc finger occupies 57-72 (CKSCRTFTEEDECAIC). In terms of domain architecture, Toprim spans 81-176 (GQLCVVEMPA…KVTRIAHGIP (96 aa)).

The protein belongs to the RecR family.

May play a role in DNA repair. It seems to be involved in an RecBC-independent recombinational process of DNA repair. It may act with RecF and RecO. This Glaesserella parasuis serovar 5 (strain SH0165) (Haemophilus parasuis) protein is Recombination protein RecR.